A 138-amino-acid polypeptide reads, in one-letter code: Putative protein encoded by LINC02912 (138 aa).

Helical transmembrane passes span 32-52 and 65-85; these read FALS…CLIC and CLIN…TISQ. Residues 109 to 138 are disordered; sequence SGGQSQHSWPCPERSKNLPQVSKQLRNRAG.

It localises to the membrane. This Homo sapiens (Human) protein is Putative protein encoded by LINC02912.